The chain runs to 398 residues: 1-deoxy-D-xylulose 5-phosphate reductoisomerase (398 aa).

Positions 10, 11, 12, 13, 36, 38, and 124 each coordinate NADPH. Lys-125 contacts 1-deoxy-D-xylulose 5-phosphate. Glu-126 is a binding site for NADPH. Mn(2+) is bound at residue Asp-150. 1-deoxy-D-xylulose 5-phosphate-binding residues include Ser-151, Glu-152, Ser-176, and His-199. Glu-152 is a Mn(2+) binding site. Gly-205 serves as a coordination point for NADPH. 1-deoxy-D-xylulose 5-phosphate is bound by residues Ser-212, Asn-217, Lys-218, and Glu-221. Glu-221 serves as a coordination point for Mn(2+).

The protein belongs to the DXR family. Mg(2+) serves as cofactor. The cofactor is Mn(2+).

It catalyses the reaction 2-C-methyl-D-erythritol 4-phosphate + NADP(+) = 1-deoxy-D-xylulose 5-phosphate + NADPH + H(+). It participates in isoprenoid biosynthesis; isopentenyl diphosphate biosynthesis via DXP pathway; isopentenyl diphosphate from 1-deoxy-D-xylulose 5-phosphate: step 1/6. In terms of biological role, catalyzes the NADPH-dependent rearrangement and reduction of 1-deoxy-D-xylulose-5-phosphate (DXP) to 2-C-methyl-D-erythritol 4-phosphate (MEP). This chain is 1-deoxy-D-xylulose 5-phosphate reductoisomerase, found in Nostoc punctiforme (strain ATCC 29133 / PCC 73102).